We begin with the raw amino-acid sequence, 145 residues long: 3-hydroxyacyl-[acyl-carrier-protein] dehydratase FabZ (145 aa).

His-49 is an active-site residue.

It belongs to the thioester dehydratase family. FabZ subfamily.

It localises to the cytoplasm. It carries out the reaction a (3R)-hydroxyacyl-[ACP] = a (2E)-enoyl-[ACP] + H2O. In terms of biological role, involved in unsaturated fatty acids biosynthesis. Catalyzes the dehydration of short chain beta-hydroxyacyl-ACPs and long chain saturated and unsaturated beta-hydroxyacyl-ACPs. This Rickettsia bellii (strain OSU 85-389) protein is 3-hydroxyacyl-[acyl-carrier-protein] dehydratase FabZ.